The chain runs to 232 residues: Lipoarabinomannan carrier protein LprG (232 aa).

Residues Met1–Gly21 form the signal peptide. The N-palmitoyl cysteine moiety is linked to residue Cys22. Cys22 carries S-diacylglycerol cysteine lipidation.

The protein belongs to the LppX/LprAFG lipoprotein family. Modified by Lgt on Cys-22 with an S-linked diacylglyceral, signal peptide is removed by LspA, Cys-22 is further modifed with a fatty acid on its amino group by Lnt yielding a triacylated protein.

Its subcellular location is the cell inner membrane. Its function is as follows. Helps membrane protein MHAS_02168/C731_2106 (P55) transport triacylglycerides (TAG) across the inner cell membrane into the periplasm and probably ultimately to the outer membrane. Binds TAG in its hydrophobic cavity and transfers it between lipid bilayers. TAG probably regulates lipid metabolism and growth regulation and plays a structural role in the outer membrane. Also binds mannosides, lipoarabinomannan and lipomannan and various glycolipids in the same cavity. The lprG-MHAS_02167/C731_2107 operon complements the vancomycin sensitivity of an M.smegmatis knockout of the same operon. The protein is Lipoarabinomannan carrier protein LprG of Mycolicibacterium hassiacum (strain DSM 44199 / CIP 105218 / JCM 12690 / 3849) (Mycobacterium hassiacum).